The chain runs to 827 residues: Villin-1 (827 aa).

Positions Met1–Met126 are necessary for homodimerization. Positions Met1–Asn734 are core. A Gelsolin-like 1 repeat occupies Gln28–Phe107. LPA/PIP2-binding site stretches follow at residues Lys112 to Lys119 and Arg138 to Arg146. Gelsolin-like repeat units follow at residues Val148–Glu216 and Glu269–Phe342. Ser366 carries the phosphoserine modification. 3 Gelsolin-like repeats span residues Asp409–Met489, Thr528–Trp595, and Thr634–Phe707. At Ser735 the chain carries Phosphoserine. The 67-residue stretch at Ser761–Phe827 folds into the HP domain. Residues Lys816–Lys824 are LPA/PIP2-binding site 3.

It belongs to the villin/gelsolin family. In terms of assembly, monomer. Homodimer; homodimerization is necessary for actin-bundling. Associates with F-actin; phosphorylation at tyrosine residues decreases the association with F-actin. Interacts (phosphorylated at C-terminus tyrosine phosphorylation sites) with PLCG1 (via the SH2 domains). Interacts (phosphorylated form) with PLCG1; the interaction is enhanced by hepatocyte growth factor (HGF). In terms of processing, phosphorylated on tyrosine residues by SRC. The unphosphorylated form increases the initial rate of actin-nucleating activity, whereas the tyrosine-phosphorylated form inhibits actin-nucleating activity, enhances actin-bundling activity and enhances actin-severing activity by reducing high Ca(2+) requirements. The tyrosine-phosphorylated form does not regulate actin-capping activity. Tyrosine phosphorylation is essential for cell migration: tyrosine phosphorylation sites in the N-terminus half regulate actin reorganization and cell morphology, whereas tyrosine phosphorylation sites in the C-terminus half regulate cell migration. Tyrosine phosphorylation is induced by epidermal growth factor (EGF) and stimulates cell migration.

It localises to the cytoplasm. The protein resides in the cytoskeleton. The protein localises to the cell projection. It is found in the lamellipodium. Its subcellular location is the ruffle. It localises to the microvillus. The protein resides in the filopodium tip. The protein localises to the filopodium. Epithelial cell-specific Ca(2+)-regulated actin-modifying protein that modulates the reorganization of microvillar actin filaments. Plays a role in the actin nucleation, actin filament bundle assembly, actin filament capping and severing. Binds phosphatidylinositol 4,5-bisphosphate (PIP2) and lysophosphatidic acid (LPA); binds LPA with higher affinity than PIP2. Binding to LPA increases its phosphorylation by SRC and inhibits all actin-modifying activities. Binding to PIP2 inhibits actin-capping and -severing activities but enhances actin-bundling activity. Regulates the intestinal epithelial cell morphology, cell invasion, cell migration and apoptosis. Protects against apoptosis induced by dextran sodium sulfate (DSS) in the gastrointestinal epithelium. Appears to regulate cell death by maintaining mitochondrial integrity. Enhances hepatocyte growth factor (HGF)-induced epithelial cell motility, chemotaxis and wound repair. The chain is Villin-1 (VIL1) from Sus scrofa (Pig).